The sequence spans 242 residues: Phosphoribosylaminoimidazole-succinocarboxamide synthase (242 aa).

It belongs to the SAICAR synthetase family.

It catalyses the reaction 5-amino-1-(5-phospho-D-ribosyl)imidazole-4-carboxylate + L-aspartate + ATP = (2S)-2-[5-amino-1-(5-phospho-beta-D-ribosyl)imidazole-4-carboxamido]succinate + ADP + phosphate + 2 H(+). The protein operates within purine metabolism; IMP biosynthesis via de novo pathway; 5-amino-1-(5-phospho-D-ribosyl)imidazole-4-carboxamide from 5-amino-1-(5-phospho-D-ribosyl)imidazole-4-carboxylate: step 1/2. This chain is Phosphoribosylaminoimidazole-succinocarboxamide synthase, found in Cyanothece sp. (strain PCC 7425 / ATCC 29141).